A 192-amino-acid chain; its full sequence is Glycerol-3-phosphate acyltransferase (192 aa).

Helical transmembrane passes span 4-24 (MFWLLATFAYLLGSLSFAILL), 54-74 (LAVLTLLGDLCKGLIPVVLAG), 80-100 (PSQQGWIGVCAVLGHLFPLYF), 112-132 (AGVLLGLYPPAAALAIAAWLL), and 154-174 (LLAWQEPHALLPMSVLTLLIV).

Belongs to the PlsY family. In terms of assembly, probably interacts with PlsX.

It is found in the cell inner membrane. The catalysed reaction is an acyl phosphate + sn-glycerol 3-phosphate = a 1-acyl-sn-glycero-3-phosphate + phosphate. The protein operates within lipid metabolism; phospholipid metabolism. Functionally, catalyzes the transfer of an acyl group from acyl-phosphate (acyl-PO(4)) to glycerol-3-phosphate (G3P) to form lysophosphatidic acid (LPA). This enzyme utilizes acyl-phosphate as fatty acyl donor, but not acyl-CoA or acyl-ACP. The protein is Glycerol-3-phosphate acyltransferase of Pseudomonas syringae pv. tomato (strain ATCC BAA-871 / DC3000).